The following is a 140-amino-acid chain: TPT1-like protein (140 aa).

Residues 6–140 (MITYWDLISH…LANFKNYQKT (135 aa)) form the TCTP domain.

Belongs to the TCTP family.

This is TPT1-like protein from Homo sapiens (Human).